Reading from the N-terminus, the 70-residue chain is Large ribosomal subunit protein bL31 (70 aa).

Positions 16, 18, 37, and 40 each coordinate Zn(2+).

It belongs to the bacterial ribosomal protein bL31 family. Type A subfamily. As to quaternary structure, part of the 50S ribosomal subunit. Requires Zn(2+) as cofactor.

Functionally, binds the 23S rRNA. The sequence is that of Large ribosomal subunit protein bL31 from Shewanella halifaxensis (strain HAW-EB4).